The following is a 270-amino-acid chain: F420 non-reducing hydrogenase II cytochrome subunit (270 aa).

Transmembrane regions (helical) follow at residues 27–47 (AIAM…WEFM), 57–77 (MIAV…NIFS), 139–159 (ILIP…IVLY), 173–193 (WIIS…VGFL), and 195–215 (VLHL…VGIL).

The protein belongs to the HupC/HyaC/HydC family. As to quaternary structure, composed of a large subunit (VhtA), a small subunit (VhtG) and a cytochrome subunit (VhtC). It depends on heme b as a cofactor.

The protein localises to the cell membrane. It carries out the reaction methanophenazine + H2 = dihydromethanophenazine. Functionally, part of the F420 non-reducing hydrogenase II complex that catalyzes the reduction of methanophenazine to dihydromethanophenazine. The chain is F420 non-reducing hydrogenase II cytochrome subunit from Methanosarcina mazei (strain ATCC BAA-159 / DSM 3647 / Goe1 / Go1 / JCM 11833 / OCM 88) (Methanosarcina frisia).